Consider the following 507-residue polypeptide: DNA replication licensing factor MCM6 (507 aa).

The MCM domain occupies 32-239 (LYHNLCTSLF…TDYAIARRIV (208 aa)). Positions 45, 85, 86, 87, 88, 89, and 190 each coordinate ATP. Positions 214–217 (SRFD) match the Arginine finger motif. Residues Arg305 and Glu308 each coordinate ADP. An N6-acetyllysine modification is found at Lys329. Residues 365 to 392 (GPGGINGHADSPAPVNGFNGSGEDASQE) form a disordered region. Ser375, Ser390, and Ser448 each carry phosphoserine. At Thr477 the chain carries Phosphothreonine.

It belongs to the MCM family. As to quaternary structure, component of the MCM2-7 complex. The complex forms a toroidal hexameric ring with the proposed subunit order MCM2-MCM6-MCM4-MCM7-MCM3-MCM5. Component of the CMG helicase complex, a hexameric ring of related MCM2-7 subunits stabilized by CDC45 and the tetrameric GINS complex. May interact with MCM10. Interacts with TIPIN. Interacts with CDT1. Interacts with MCMBP. Interacts with DDI2. Post-translationally, O-glycosylated (O-GlcNAcylated), in a cell cycle-dependent manner.

The protein localises to the nucleus. It is found in the chromosome. It carries out the reaction ATP + H2O = ADP + phosphate + H(+). In terms of biological role, acts as a component of the MCM2-7 complex (MCM complex) which is the replicative helicase essential for 'once per cell cycle' DNA replication initiation and elongation in eukaryotic cells. Core component of CDC45-MCM-GINS (CMG) helicase, the molecular machine that unwinds template DNA during replication, and around which the replisome is built. The active ATPase sites in the MCM2-7 ring are formed through the interaction surfaces of two neighboring subunits such that a critical structure of a conserved arginine finger motif is provided in trans relative to the ATP-binding site of the Walker A box of the adjacent subunit. The six ATPase active sites, however, are likely to contribute differentially to the complex helicase activity. The protein is DNA replication licensing factor MCM6 (Mcm6) of Rattus norvegicus (Rat).